We begin with the raw amino-acid sequence, 518 residues long: MCRVQGMIEEIVNRLRGKLIVSCQPVPESPFDNVASVVAYARAAEASGASGLRIEGAANVAAAAQASTLPVIGLIKRDLDDSPVRITPFLEDVAALCDAGAAIVAVDATDRRRPVPAAELIGEIKRRGRIAMADISTLAEARNALAAGADIIGTTMSGYTGEGPTPKDPDLDLVAHCSRLGSFLIAEGRYNSPQQAGEAIRAGADAVVVGSAITRPEHITGWFRDAVESAAKPSSPVLAFDIGGTKTLAALVRGREILERRVMTTPASVGSESWIGAIASLSADWQGRYQRAAIAVTGRVDGEIWSSLNPETLAIPPDYPLGRRMGAALGAPVEVINDAQAAAWGEYRFGAARGRDMVFLTISSGIGGGIVLGGRLIRGARGIAGSLGQVLVAGPSGFVRLETLASGFGIAKMALEAGHAGDARSVFSAAAAGEGWARRILLDAASQLAAAVAGLQAIVDPECIVIGGGVGMADGFLDMLREALGSHSAVMRPDIVAAELGADAGIIGVADLAATYFS.

The manNAc-6-P epimerase stretch occupies residues 1–234; it reads MCRVQGMIEE…DAVESAAKPS (234 aa). Residues 235–518 form a manNAc kinase region; sequence SPVLAFDIGG…VADLAATYFS (284 aa). Residues 239–246 and 365–372 each bind ATP; these read AFDIGGTK and GIGGGIVL.

The protein in the N-terminal section; belongs to the NanE family. This sequence in the C-terminal section; belongs to the ROK (NagC/XylR) family. NanK subfamily.

It catalyses the reaction an N-acyl-D-glucosamine 6-phosphate = an N-acyl-D-mannosamine 6-phosphate. The catalysed reaction is an N-acyl-D-mannosamine + ATP = an N-acyl-D-mannosamine 6-phosphate + ADP + H(+). The protein operates within amino-sugar metabolism; N-acetylneuraminate degradation; D-fructose 6-phosphate from N-acetylneuraminate: step 2/5. It functions in the pathway amino-sugar metabolism; N-acetylneuraminate degradation; D-fructose 6-phosphate from N-acetylneuraminate: step 3/5. In terms of biological role, converts N-acetylmannosamine-6-phosphate (ManNAc-6-P) to N-acetylglucosamine-6-phosphate (GlcNAc-6-P). Functionally, catalyzes the phosphorylation of N-acetylmannosamine (ManNAc) to ManNAc-6-P. The chain is Bifunctional enzyme NanE/NanK (nanEK) from Brucella melitensis biotype 1 (strain ATCC 23456 / CCUG 17765 / NCTC 10094 / 16M).